A 312-amino-acid polypeptide reads, in one-letter code: R2-like ligand binding oxidase (312 aa).

Positions 68, 101, and 104 each coordinate Mn(2+). The 3-(O4'-tyrosyl)-valine (Val-Tyr) cross-link spans 71 to 162 (VTQDIQPFMA…AAQVRASATY (92 aa)). Glu-101 serves as a coordination point for Fe cation. Fe cation contacts are provided by Glu-167, Glu-202, and His-205.

It belongs to the ribonucleoside diphosphate reductase small chain family. R2-like ligand binding oxidase subfamily. As to quaternary structure, homodimer. Fe cation is required as a cofactor. The cofactor is Mn(2+).

Probable oxidase that might be involved in lipid metabolism. This is R2-like ligand binding oxidase from Mycobacterium sp. (strain KMS).